A 146-amino-acid chain; its full sequence is Large ribosomal subunit protein uL15 (146 aa).

Residues methionine 1–glutamine 54 are disordered. Gly residues-rich tracts occupy residues arginine 21–alanine 31 and serine 42–glycine 52.

Belongs to the universal ribosomal protein uL15 family. Part of the 50S ribosomal subunit.

In terms of biological role, binds to the 23S rRNA. This Clostridium beijerinckii (strain ATCC 51743 / NCIMB 8052) (Clostridium acetobutylicum) protein is Large ribosomal subunit protein uL15.